The primary structure comprises 93 residues: Large ribosomal subunit protein uL23cz/uL23cy (93 aa).

This sequence belongs to the universal ribosomal protein uL23 family. Part of the 50S ribosomal subunit.

The protein resides in the plastid. The protein localises to the chloroplast. In terms of biological role, binds to 23S rRNA. The polypeptide is Large ribosomal subunit protein uL23cz/uL23cy (rpl23-A) (Oenothera elata subsp. hookeri (Hooker's evening primrose)).